A 193-amino-acid chain; its full sequence is Holliday junction branch migration complex subunit RuvA (193 aa).

The tract at residues 1–64 is domain I; it reads MIGRIAGTLI…EDAHLLYGFG (64 aa). Residues 65-143 are domain II; that stretch reads TAAERETFRQ…ADLGTVPGGP (79 aa). The flexible linker stretch occupies residues 144 to 151; sequence AVSDDAVD. Positions 151–193 are domain III; that stretch reads DVLNALLALGYSDKEAAQAIKQVPAGTGVSEGIKLALKALSKG.

It belongs to the RuvA family. Homotetramer. Forms an RuvA(8)-RuvB(12)-Holliday junction (HJ) complex. HJ DNA is sandwiched between 2 RuvA tetramers; dsDNA enters through RuvA and exits via RuvB. An RuvB hexamer assembles on each DNA strand where it exits the tetramer. Each RuvB hexamer is contacted by two RuvA subunits (via domain III) on 2 adjacent RuvB subunits; this complex drives branch migration. In the full resolvosome a probable DNA-RuvA(4)-RuvB(12)-RuvC(2) complex forms which resolves the HJ.

It localises to the cytoplasm. Its function is as follows. The RuvA-RuvB-RuvC complex processes Holliday junction (HJ) DNA during genetic recombination and DNA repair, while the RuvA-RuvB complex plays an important role in the rescue of blocked DNA replication forks via replication fork reversal (RFR). RuvA specifically binds to HJ cruciform DNA, conferring on it an open structure. The RuvB hexamer acts as an ATP-dependent pump, pulling dsDNA into and through the RuvAB complex. HJ branch migration allows RuvC to scan DNA until it finds its consensus sequence, where it cleaves and resolves the cruciform DNA. The polypeptide is Holliday junction branch migration complex subunit RuvA (Ralstonia nicotianae (strain ATCC BAA-1114 / GMI1000) (Ralstonia solanacearum)).